Reading from the N-terminus, the 169-residue chain is Transcription regulatory protein SNF11 (169 aa).

The tract at residues 1 to 24 (MSSEIAYSNTNTNTENENRNTGAG) is disordered. Ser-2 carries the N-acetylserine modification. The span at 9-21 (NTNTNTENENRNT) shows a compositional bias: low complexity. Tandem repeats lie at residues 28 to 31 (NTNA), 32 to 35 (NANA), 36 to 39 (NATA), 40 to 43 (NATA), 44 to 47 (NATA), 48 to 51 (NATA), 76 to 80 (LLARV), and 160 to 165 (LLLARV). The interval 28–51 (NTNANANANATANATANATANATA) is 6 X 4 AA tandem repeats of N-[AT]-[NT]-A. Residues 76-165 (LLARVIQMNN…SKLYLLLARV (90 aa)) form a 2 X 5 AA repeats of L-L-A-R-V region.

In terms of assembly, component of the SWI/SNF global transcription activator complex. The 1.14 MDa SWI/SNF complex is composed of 11 different subunits: one copy each of SWI1, SNF2/SWI2, SNF5, SNF12/SWP73, ARP7/SWP61, ARP9/SWP59; two copies each of SWI3, SNF6, SNF11, SWP82; and three copies of TAF14/SWP29.

It is found in the nucleus. In terms of biological role, involved in transcriptional activation. Component of the SWI/SNF complex, an ATP-dependent chromatin remodeling complex, which is required for the positive and negative regulation of gene expression of a large number of genes. It changes chromatin structure by altering DNA-histone contacts within a nucleosome, leading eventually to a change in nucleosome position, thus facilitating or repressing binding of gene-specific transcription factors. In Saccharomyces cerevisiae (strain ATCC 204508 / S288c) (Baker's yeast), this protein is Transcription regulatory protein SNF11 (SNF11).